The following is a 149-amino-acid chain: SsrA-binding protein (149 aa).

This sequence belongs to the SmpB family.

It is found in the cytoplasm. Required for rescue of stalled ribosomes mediated by trans-translation. Binds to transfer-messenger RNA (tmRNA), required for stable association of tmRNA with ribosomes. tmRNA and SmpB together mimic tRNA shape, replacing the anticodon stem-loop with SmpB. tmRNA is encoded by the ssrA gene; the 2 termini fold to resemble tRNA(Ala) and it encodes a 'tag peptide', a short internal open reading frame. During trans-translation Ala-aminoacylated tmRNA acts like a tRNA, entering the A-site of stalled ribosomes, displacing the stalled mRNA. The ribosome then switches to translate the ORF on the tmRNA; the nascent peptide is terminated with the 'tag peptide' encoded by the tmRNA and targeted for degradation. The ribosome is freed to recommence translation, which seems to be the essential function of trans-translation. The sequence is that of SsrA-binding protein from Anaplasma marginale (strain Florida).